The chain runs to 33 residues: U23-ctenitoxin-Pn1a (33 aa).

3 cysteine pairs are disulfide-bonded: C3–C16, C10–C21, and C15–C30.

Expressed by the venom gland.

It is found in the secreted. Its function is as follows. Non-toxic to mice. The protein is U23-ctenitoxin-Pn1a of Phoneutria nigriventer (Brazilian armed spider).